Consider the following 323-residue polypeptide: Beta-ketoacyl-[acyl-carrier-protein] synthase III (323 aa).

Active-site residues include Cys112 and His248. The segment at 249–253 is ACP-binding; sequence QANRR. The active site involves Asn278.

Belongs to the thiolase-like superfamily. FabH family. Homodimer.

It is found in the cytoplasm. The catalysed reaction is malonyl-[ACP] + acetyl-CoA + H(+) = 3-oxobutanoyl-[ACP] + CO2 + CoA. It functions in the pathway lipid metabolism; fatty acid biosynthesis. Functionally, catalyzes the condensation reaction of fatty acid synthesis by the addition to an acyl acceptor of two carbons from malonyl-ACP. Catalyzes the first condensation reaction which initiates fatty acid synthesis and may therefore play a role in governing the total rate of fatty acid production. Possesses both acetoacetyl-ACP synthase and acetyl transacylase activities. Its substrate specificity determines the biosynthesis of branched-chain and/or straight-chain of fatty acids. This Streptococcus agalactiae serotype Ia (strain ATCC 27591 / A909 / CDC SS700) protein is Beta-ketoacyl-[acyl-carrier-protein] synthase III.